Consider the following 652-residue polypeptide: ATP-binding cassette sub-family G member 5 (652 aa).

Positions 1-30 are disordered; sequence MSELPFLSPEGARGPHNNRGSQSSLEEGSV. At 1–384 the chain is on the cytoplasmic side; the sequence is MSELPFLSPE…RVTRNLMRNK (384 aa). The span at 18 to 30 shows a compositional bias: polar residues; that stretch reads NRGSQSSLEEGSV. In terms of domain architecture, ABC transporter spans 39–294; that stretch reads LGVLNVSFSV…FNNCGYPCPE (256 aa). 87–94 is a binding site for ATP; that stretch reads GSSGSGKT. Residues 385–405 traverse the membrane as a helical segment; that stretch reads QVVIMRLVQNLIMGLFLIFYL. The ABC transmembrane type-2 domain occupies 389-646; that stretch reads MRLVQNLIMG…ILGMVVFKVR (258 aa). Residues 406–422 are Extracellular-facing; that stretch reads LRVQNNMLKGAVQDRVG. The helical transmembrane segment at 423 to 443 threads the bilayer; the sequence is LLYQLVGATPYTGMLNAVNLF. Residues 444–468 are Cytoplasmic-facing; it reads PMLRAVSDQESQDGLYQKWQMLLAY. A helical membrane pass occupies residues 469 to 490; that stretch reads VLHALPFSIVATVIFSSVCYWT. The Extracellular segment spans residues 491–501; sequence LGLYPEVARFG. Residues 502–522 form a helical membrane-spanning segment; that stretch reads YFSAALLAPHLIGEFLTLVLL. Residues 523–529 lie on the Cytoplasmic side of the membrane; that stretch reads GMVQNPN. The helical transmembrane segment at 530 to 550 threads the bilayer; sequence IVNSIVALLSISGLLIGSGFI. At 551 to 624 the chain is on the extracellular side; sequence RNIEEMPIPL…PGATSRFTTN (74 aa). N-linked (GlcNAc...) asparagine glycans are attached at residues Asn585 and Asn592. A helical transmembrane segment spans residues 625–645; it reads FLILYSFIPTLVILGMVVFKV. Residues 646–652 are Cytoplasmic-facing; it reads RDYLISR.

It belongs to the ABC transporter superfamily. ABCG family. Eye pigment precursor importer (TC 3.A.1.204) subfamily. As to quaternary structure, heterodimer with ABCG8. Requires Mg(2+) as cofactor. N-glycosylated. N-glycosylation is important for efficient export out of the endoplasmic reticulum. As to expression, detected in liver (at protein level). Expressed only in liver and intestine.

Its subcellular location is the cell membrane. It is found in the apical cell membrane. It carries out the reaction cholesterol(in) + ATP + H2O = cholesterol(out) + ADP + phosphate + H(+). The enzyme catalyses sitosterol(in) + ATP + H2O = sitosterol(out) + ADP + phosphate + H(+). In terms of biological role, ABCG5 and ABCG8 form an obligate heterodimer that mediates Mg(2+)- and ATP-dependent sterol transport across the cell membrane. Plays an essential role in the selective transport of dietary plant sterols and cholesterol in and out of the enterocytes and in the selective sterol excretion by the liver into bile. Required for normal sterol homeostasis. The heterodimer with ABCG8 has ATPase activity. The polypeptide is ATP-binding cassette sub-family G member 5 (Rattus norvegicus (Rat)).